We begin with the raw amino-acid sequence, 379 residues long: MALRGGHAAAAAGVSSGSEDDDEEAGFSRSYFLAKEKEPSSGKKRARAAGKLSDLNLVDEQVLRASLAEIPPKHEREVEALTRSYKEQYRNWLFELRCGFGLLMYGFGSKKMLLEDFASTTLSDFTVIVVNGYLPSINLKQVIVTIAEIFWEQTKLKRKRQTATRSQLQPFASQSIDDIISFLNNQTSDNGDDNVCLLIHNIDGPALRDAESQQYLAQVSCCPQVHVVASVDHVNAPLLWDKKMVHTQFKWSWYHVPTFAPYKVEGVFYPLILASGGHAQTMKTALVVLQSLTPNAQSVFRVLAEYQLAHEKEEGMHFSSLYTKCRERFLVSSQVTLNSHLTEFKDHDLVKIRKHSDGQDCLHIPLVSDALEKLLQELT.

Residues 1–25 are disordered; it reads MALRGGHAAAAAGVSSGSEDDDEEA. Residues 8 to 17 are compositionally biased toward low complexity; the sequence is AAAAAGVSSG.

The protein belongs to the ORC2 family. In terms of assembly, component of the origin recognition complex (ORC) composed of at least ORC1, ORC2, ORC3, ORC4, ORC5 and ORC6. ORC is regulated in a cell-cycle and development dependent manner. It is sequentially assembled at the exit from anaphase of mitosis and disassembled as cells enter S phase.

It localises to the nucleus. Essential protein. Component of the origin recognition complex (ORC) that binds origins of replication. DNA-binding is ATP-dependent, however specific DNA sequences that define origins of replication have not been identified so far. ORC is required to assemble the pre-replication complex necessary to initiate DNA replication. In Oryza sativa subsp. indica (Rice), this protein is Origin of replication complex subunit 2.